The chain runs to 274 residues: tRNA pseudouridine synthase A (274 aa).

Asp-51 functions as the Nucleophile in the catalytic mechanism. Tyr-109 provides a ligand contact to substrate.

Belongs to the tRNA pseudouridine synthase TruA family. Homodimer.

It catalyses the reaction uridine(38/39/40) in tRNA = pseudouridine(38/39/40) in tRNA. Functionally, formation of pseudouridine at positions 38, 39 and 40 in the anticodon stem and loop of transfer RNAs. The protein is tRNA pseudouridine synthase A of Acidovorax ebreus (strain TPSY) (Diaphorobacter sp. (strain TPSY)).